We begin with the raw amino-acid sequence, 162 residues long: Anaerobic nitrite reductase (162 aa).

Ser2 is modified (N-acetylserine). The Globin domain maps to 9 to 158; the sequence is VFTEEQEALV…LVAAIKFEMK (150 aa). The short motif at 42-46 is the Homodimerization element; sequence EIAPS. The heme b site is built by Ser52, Lys66, His70, Arg100, and His105. Positions 112 to 124 match the Homodimerization motif; the sequence is NEHFEVTRFALLE.

The protein belongs to the plant globin family. Homodimer with distinct heme coordination in each subunits. The cofactor is heme b. In terms of tissue distribution, root nodules.

The protein localises to the cytoplasm. The protein resides in the nucleus. It carries out the reaction Fe(III)-heme b-[protein] + nitric oxide + H2O = Fe(II)-heme b-[protein] + nitrite + 2 H(+). Its function is as follows. Phytoglobin that reduces nitrite to nitric oxide (NO) under anoxic conditions (e.g. during flooding or in waterlogged soil) and upon root nodulation. Required for general plant development and during nodulation, especially for the onset of symbiosis. Monitors nitric oxide (NO) levels during early phase of the nitrogen-fixing symbiosis and buffers oxygen in functioning nodules. May not function as an oxygen storage or transport protein. Has an unusually high affinity for O(2) through a hexacoordinate heme iron because of a very low dissociation constant. In Parasponia andersonii (Sponia andersonii), this protein is Anaerobic nitrite reductase.